The following is a 178-amino-acid chain: Large ribosomal subunit protein uL6 (178 aa).

This sequence belongs to the universal ribosomal protein uL6 family. In terms of assembly, part of the 50S ribosomal subunit.

Functionally, this protein binds to the 23S rRNA, and is important in its secondary structure. It is located near the subunit interface in the base of the L7/L12 stalk, and near the tRNA binding site of the peptidyltransferase center. The sequence is that of Large ribosomal subunit protein uL6 from Kocuria rhizophila (strain ATCC 9341 / DSM 348 / NBRC 103217 / DC2201).